The primary structure comprises 350 residues: Dihydroorotase (350 aa).

Positions 17 and 19 each coordinate Zn(2+). Substrate contacts are provided by residues 19-21 (HFR) and Asn-45. Lys-103, His-140, and His-178 together coordinate Zn(2+). N6-carboxylysine is present on Lys-103. Position 140 (His-140) interacts with substrate. Leu-223 is a binding site for substrate. Asp-251 is a binding site for Zn(2+). Asp-251 is an active-site residue. 2 residues coordinate substrate: His-255 and Ala-267.

This sequence belongs to the metallo-dependent hydrolases superfamily. DHOase family. Class II DHOase subfamily. In terms of assembly, homodimer. The cofactor is Zn(2+).

The catalysed reaction is (S)-dihydroorotate + H2O = N-carbamoyl-L-aspartate + H(+). It participates in pyrimidine metabolism; UMP biosynthesis via de novo pathway; (S)-dihydroorotate from bicarbonate: step 3/3. Its function is as follows. Catalyzes the reversible cyclization of carbamoyl aspartate to dihydroorotate. This chain is Dihydroorotase, found in Photorhabdus laumondii subsp. laumondii (strain DSM 15139 / CIP 105565 / TT01) (Photorhabdus luminescens subsp. laumondii).